Reading from the N-terminus, the 107-residue chain is Keratin, type I cytoskeletal 20 (107 aa).

A head region spans residues 1 to 7 (GNLWVGN). The interval 8–43 (EKMTMKNLNDRLASYLEKVRSLEQSNSKFELQIKQW) is coil 1A. An IF rod domain is found at 8–107 (EKMTMKNLND…ETERGIRLAV (100 aa)). Residues 44 to 61 (YESNTPGISRDHSAYLQQ) are linker 1. Residues 62-107 (IQDLRNQIRDAQLQNARCVLQIDNAKLAAEDFRLKYETERGIRLAV) form a coil 1B region.

This sequence belongs to the intermediate filament family. In terms of assembly, heterotetramer of two type I and two type II keratins. Associates with KRT8.

Its function is as follows. Plays a significant role in maintaining keratin filament organization in intestinal epithelia. When phosphorylated, plays a role in the secretion of mucin in the small intestine. The sequence is that of Keratin, type I cytoskeletal 20 from Sus scrofa (Pig).